A 119-amino-acid chain; its full sequence is Large ribosomal subunit protein bL19 (119 aa).

Belongs to the bacterial ribosomal protein bL19 family.

Functionally, this protein is located at the 30S-50S ribosomal subunit interface and may play a role in the structure and function of the aminoacyl-tRNA binding site. In Psychromonas ingrahamii (strain DSM 17664 / CCUG 51855 / 37), this protein is Large ribosomal subunit protein bL19.